The following is a 100-amino-acid chain: Phosphoribosyl-ATP pyrophosphatase (100 aa).

It belongs to the PRA-PH family.

The protein resides in the cytoplasm. It catalyses the reaction 1-(5-phospho-beta-D-ribosyl)-ATP + H2O = 1-(5-phospho-beta-D-ribosyl)-5'-AMP + diphosphate + H(+). It functions in the pathway amino-acid biosynthesis; L-histidine biosynthesis; L-histidine from 5-phospho-alpha-D-ribose 1-diphosphate: step 2/9. This chain is Phosphoribosyl-ATP pyrophosphatase (hisE), found in Methanopyrus kandleri (strain AV19 / DSM 6324 / JCM 9639 / NBRC 100938).